Consider the following 432-residue polypeptide: Queuine tRNA-ribosyltransferase accessory subunit 2 (432 aa).

Positions 329, 331, 334, and 360 each coordinate Zn(2+). Residues 390–432 (GQKSLPPYEPPKEEKLPMPAAQKAELMEPMEDLGEKQNKKQRA) form a disordered region. The segment covering 422-432 (LGEKQNKKQRA) has biased composition (basic and acidic residues).

It belongs to the queuine tRNA-ribosyltransferase family. QTRT2 subfamily. As to quaternary structure, heterodimer of a catalytic subunit and an accessory subunit. It depends on Zn(2+) as a cofactor.

The protein resides in the cytoplasm. In terms of biological role, non-catalytic subunit of the queuine tRNA-ribosyltransferase (TGT) that catalyzes the base-exchange of a guanine (G) residue with queuine (Q) at position 34 (anticodon wobble position) in tRNAs with GU(N) anticodons (tRNA-Asp, -Asn, -His and -Tyr), resulting in the hypermodified nucleoside queuosine (7-(((4,5-cis-dihydroxy-2-cyclopenten-1-yl)amino)methyl)-7-deazaguanosine). The sequence is that of Queuine tRNA-ribosyltransferase accessory subunit 2 from Anopheles gambiae (African malaria mosquito).